Consider the following 557-residue polypeptide: Potassium-transporting ATPase potassium-binding subunit (557 aa).

Transmembrane regions (helical) follow at residues 5–25 (GFLL…PLGS), 63–83 (LCAI…MLLG), 132–152 (GLTV…FALI), 170–190 (LLRI…LFFI), 253–273 (FVQM…FGEV), 283–303 (LLWA…WAEV), 329–349 (VLVS…AVIA), 356–376 (ALGG…FGGV), 379–399 (GLYG…LMIG), 416–436 (LTAL…ALAM), 484–504 (LLAF…MAIA), and 526–546 (LFVG…FIPA).

It belongs to the KdpA family. In terms of assembly, the system is composed of three essential subunits: KdpA, KdpB and KdpC.

Its subcellular location is the cell inner membrane. Functionally, part of the high-affinity ATP-driven potassium transport (or Kdp) system, which catalyzes the hydrolysis of ATP coupled with the electrogenic transport of potassium into the cytoplasm. This subunit binds the periplasmic potassium ions and delivers the ions to the membrane domain of KdpB through an intramembrane tunnel. This Escherichia coli O9:H4 (strain HS) protein is Potassium-transporting ATPase potassium-binding subunit.